The sequence spans 2190 residues: Non-reducing polyketide synthase mapC' (2190 aa).

The interval 14-268 (VLFGPQCPDI…HHEAHREGIQ (255 aa)) is N-terminal acylcarrier protein transacylase domain (SAT). Residues 401 to 817 (ASPIAITGMA…GSNAALIVKE (417 aa)) enclose the Ketosynthase family 3 (KS3) domain. Catalysis depends on for beta-ketoacyl synthase activity residues Cys-566, His-701, and His-740. Residues 893–1190 (CFGGQNGLTA…NVTSALWAQG (298 aa)) are malonyl-CoA:ACP transacylase (MAT) domain. Ser-979 serves as the catalytic For acyl/malonyl transferase activity. Residues 1243–1375 (GQEAGLLCQL…GTVCLHQERS (133 aa)) are N-terminal hotdog fold. A PKS/mFAS DH domain is found at 1243 to 1552 (GQEAGLLCQL…FTSVSIRSLT (310 aa)). Residues 1251 to 1556 (QLSESPDERL…SIRSLTRALA (306 aa)) form a product template (PT) domain region. His-1277 functions as the Proton acceptor; for dehydratase activity in the catalytic mechanism. The tract at residues 1401-1552 (ASNGLKGSTV…FTSVSIRSLT (152 aa)) is C-terminal hotdog fold. Residue Asp-1458 is the Proton donor; for dehydratase activity of the active site. Positions 1597–1671 (ANDLATVQEM…GLVEHIFPGH (75 aa)) constitute a Carrier domain. Ser-1631 is modified (O-(pantetheine 4'-phosphoryl)serine). Positions 1840 to 2187 (ATMSPSKPIK…AEGYEFLRTH (348 aa)) are methyltransferase (CMeT) domain. Residues Ser-1969, Asp-2127, and His-2159 each act as for thioesterase activity in the active site.

It is found in the cytoplasm. The protein resides in the cytosol. The catalysed reaction is 3 malonyl-CoA + acetyl-CoA + S-adenosyl-L-methionine + H(+) = 5-methylorsellinate + S-adenosyl-L-homocysteine + 3 CO2 + 4 CoA. It functions in the pathway secondary metabolite biosynthesis; terpenoid biosynthesis. Functionally, non-reducing polyketide synthase; part of the gene cluster that mediates the biosynthesis of mycophenolic acid (MPA), the first isolated antibiotic natural product in the world obtained from a culture of Penicillium brevicompactum in 1893. MpaC' catalyzes the synthesis of 5-methylorsellinic acid (5MOA) via the condensation of 1 acetyl-CoA starter unit with 3 malonyl-CoA units and one methylation step. The first step of the pathway is the synthesis of 5-methylorsellinic acid (5MOA) by the cytosolic polyketide synthase mpaC. 5MOA is then converted to the phthalide compound 5,7-dihydroxy-4,6-dimethylphthalide (DHMP) by the endoplasmic reticulum-bound cytochrome P450 monooxygenase mpaDE. MpaDE first catalyzes hydroxylation of 5-MOA to 4,6-dihydroxy-2-(hydroxymethyl)-3-methylbenzoic acid (DHMB). MpaDE then acts as a lactone synthase that catalyzes the ring closure to convert DHMB into DHMP. The next step is the prenylation of DHMP by the Golgi apparatus-associated prenyltransferase mpaA to yield farnesyl-DHMP (FDHMP). The ER-bound oxygenase mpaB then mediates the oxidative cleavage the C19-C20 double bond in FDHMP to yield FDHMP-3C via a mycophenolic aldehyde intermediate. The O-methyltransferase mpaG catalyzes the methylation of FDHMP-3C to yield MFDHMP-3C. After the cytosolic methylation of FDHMP-3C, MFDHMP-3C enters into peroxisomes probably via free diffusion due to its low molecular weight. Upon a peroxisomal CoA ligation reaction, catalyzed by a beta-oxidation component enzyme acyl-CoA ligase ACL891, MFDHMP-3C-CoA would then be restricted to peroxisomes for the following beta-oxidation pathway steps. The peroxisomal beta-oxidation machinery than converts MFDHMP-3C-CoA into MPA_CoA, via a beta-oxidation chain-shortening process. Finally mpaH acts as a peroxisomal acyl-CoA hydrolase with high substrate specificity toward MPA-CoA to release the final product MPA. The protein is Non-reducing polyketide synthase mapC' of Penicillium brevicompactum.